Reading from the N-terminus, the 317-residue chain is Small ribosomal subunit biogenesis GTPase RsgA (317 aa).

Residues 88-249 (DQYKSKLFAA…LIDSPGFQEF (162 aa)) form the CP-type G domain. Residues 136–139 (NKID) and 190–198 (GQSGMGKST) contribute to the GTP site. Zn(2+) is bound by residues C273, C278, H280, and C286.

It belongs to the TRAFAC class YlqF/YawG GTPase family. RsgA subfamily. In terms of assembly, monomer. Associates with 30S ribosomal subunit, binds 16S rRNA. Requires Zn(2+) as cofactor.

The protein resides in the cytoplasm. Functionally, one of several proteins that assist in the late maturation steps of the functional core of the 30S ribosomal subunit. Helps release RbfA from mature subunits. May play a role in the assembly of ribosomal proteins into the subunit. Circularly permuted GTPase that catalyzes slow GTP hydrolysis, GTPase activity is stimulated by the 30S ribosomal subunit. In Paraburkholderia phymatum (strain DSM 17167 / CIP 108236 / LMG 21445 / STM815) (Burkholderia phymatum), this protein is Small ribosomal subunit biogenesis GTPase RsgA.